The following is a 699-amino-acid chain: Elongation factor G (699 aa).

A tr-type G domain is found at 8–286; the sequence is EKLRNIGIVA…AVIVTYPLPI (279 aa). Residues 17 to 24, 84 to 88, and 138 to 141 each bind GTP; these read AHIDAGKT, DTPGH, and NKMD.

It belongs to the TRAFAC class translation factor GTPase superfamily. Classic translation factor GTPase family. EF-G/EF-2 subfamily.

The protein localises to the cytoplasm. Its function is as follows. Catalyzes the GTP-dependent ribosomal translocation step during translation elongation. During this step, the ribosome changes from the pre-translocational (PRE) to the post-translocational (POST) state as the newly formed A-site-bound peptidyl-tRNA and P-site-bound deacylated tRNA move to the P and E sites, respectively. Catalyzes the coordinated movement of the two tRNA molecules, the mRNA and conformational changes in the ribosome. In Aquifex pyrophilus, this protein is Elongation factor G (fusA).